Reading from the N-terminus, the 107-residue chain is Nucleoid-associated protein A1I_00660 (107 aa).

Positions 81-107 (KCDSDSQNSMSGALSGMSLPPGFKMPF) are disordered.

This sequence belongs to the YbaB/EbfC family. As to quaternary structure, homodimer.

The protein localises to the cytoplasm. It localises to the nucleoid. Functionally, binds to DNA and alters its conformation. May be involved in regulation of gene expression, nucleoid organization and DNA protection. This Rickettsia bellii (strain OSU 85-389) protein is Nucleoid-associated protein A1I_00660.